The sequence spans 452 residues: Trigger factor (452 aa).

Residues 171–256 form the PPIase FKBP-type domain; sequence GDRVTVSFKG…ATKLEAPQET (86 aa).

This sequence belongs to the FKBP-type PPIase family. Tig subfamily.

It is found in the cytoplasm. The enzyme catalyses [protein]-peptidylproline (omega=180) = [protein]-peptidylproline (omega=0). Its function is as follows. Involved in protein export. Acts as a chaperone by maintaining the newly synthesized protein in an open conformation. Functions as a peptidyl-prolyl cis-trans isomerase. The sequence is that of Trigger factor from Rhodopseudomonas palustris (strain ATCC BAA-98 / CGA009).